A 698-amino-acid polypeptide reads, in one-letter code: tRNA (guanine(37)-N(1))-methyltransferase (698 aa).

The segment at 233–254 (DSTAHDSVQRNEGKTPKGPLDG) is disordered. Basic and acidic residues predominate over residues 234–247 (STAHDSVQRNEGKT). S-adenosyl-L-methionine contacts are provided by residues arginine 394, 432–433 (DI), and 459–460 (DA). 2 disordered regions span residues 500 to 522 (PDQNNVDTGKRKKRESDRVGHVD) and 534 to 582 (KKKL…DAPR). Composition is skewed to basic and acidic residues over residues 513–522 (RESDRVGHVD), 539–550 (HADTNDPLEERP), and 569–582 (TNNDSEKTKEDAPR). An S-adenosyl-L-methionine-binding site is contributed by asparagine 603.

The protein belongs to the class I-like SAM-binding methyltransferase superfamily. TRM5/TYW2 family. As to quaternary structure, monomer.

It localises to the mitochondrion matrix. It is found in the nucleus. The protein localises to the cytoplasm. It carries out the reaction guanosine(37) in tRNA + S-adenosyl-L-methionine = N(1)-methylguanosine(37) in tRNA + S-adenosyl-L-homocysteine + H(+). Functionally, specifically methylates the N1 position of guanosine-37 in various cytoplasmic and mitochondrial tRNAs. Methylation is not dependent on the nature of the nucleoside 5' of the target nucleoside. This is the first step in the biosynthesis of wybutosine (yW), a modified base adjacent to the anticodon of tRNAs and required for accurate decoding. This is tRNA (guanine(37)-N(1))-methyltransferase from Plasmodium knowlesi (strain H).